The primary structure comprises 299 residues: Phosphate import ATP-binding protein PstB 1 (299 aa).

Residues 1–51 (MTENEMTSNDSTEPTPTTETAASSPDPSGDPLIEQSIDVEGTDSTAAETGK) form a disordered region. The segment covering 10 to 27 (DSTEPTPTTETAASSPDP) has biased composition (low complexity). An ABC transporter domain is found at 54–294 (IESSDLNVFY…PESQRVEDYI (241 aa)). Residue 86–93 (GPSGCGKS) coordinates ATP.

Belongs to the ABC transporter superfamily. Phosphate importer (TC 3.A.1.7) family. As to quaternary structure, the complex is composed of two ATP-binding proteins (PstB), two transmembrane proteins (PstC and PstA) and a solute-binding protein (PstS).

Its subcellular location is the cell membrane. It catalyses the reaction phosphate(out) + ATP + H2O = ADP + 2 phosphate(in) + H(+). In terms of biological role, part of the ABC transporter complex PstSACB involved in phosphate import. Responsible for energy coupling to the transport system. In Haloarcula marismortui (strain ATCC 43049 / DSM 3752 / JCM 8966 / VKM B-1809) (Halobacterium marismortui), this protein is Phosphate import ATP-binding protein PstB 1.